The chain runs to 162 residues: UPF0102 protein Bpet0439 (162 aa).

A disordered region spans residues 15-52 (QAQQRQMKRRRAAAHRAARGPAPARAPRASPTQRTGTA). Basic residues predominate over residues 20–32 (QMKRRRAAAHRAA). Residues 33–48 (RGPAPARAPRASPTQR) are compositionally biased toward low complexity.

It belongs to the UPF0102 family.

In Bordetella petrii (strain ATCC BAA-461 / DSM 12804 / CCUG 43448), this protein is UPF0102 protein Bpet0439.